The sequence spans 537 residues: Beta-arabinofuranosyltransferase RAY1 (537 aa).

Residues 370 to 372 (DVD) carry the DXD motif motif.

This sequence belongs to the glycosyltransferase 77 family.

Its function is as follows. Beta-arabinofuranosyltransferase that transfers specifically an arabinosyl residue from UDP-arabinofuranose to the monosaccharide galactose or beta-methyl-galactoside in vitro. Catalyzes the addition of a beta-arabinofuranose residue onto a beta-galactosyl residue of an Yariv-precipitable wall polymer in vivo. In Arabidopsis thaliana (Mouse-ear cress), this protein is Beta-arabinofuranosyltransferase RAY1.